Here is a 1234-residue protein sequence, read N- to C-terminus: DNA-directed RNA polymerase subunit beta (1234 aa).

Residues 1189 to 1212 (VLSSQDNDYEEPEENDEEDELNLD) form a disordered region. Positions 1195-1212 (NDYEEPEENDEEDELNLD) are enriched in acidic residues.

The protein belongs to the RNA polymerase beta chain family. As to quaternary structure, the RNAP catalytic core consists of 2 alpha, 1 beta, 1 beta' and 1 omega subunit. When a sigma factor is associated with the core the holoenzyme is formed, which can initiate transcription.

The catalysed reaction is RNA(n) + a ribonucleoside 5'-triphosphate = RNA(n+1) + diphosphate. In terms of biological role, DNA-dependent RNA polymerase catalyzes the transcription of DNA into RNA using the four ribonucleoside triphosphates as substrates. The protein is DNA-directed RNA polymerase subunit beta of Clostridium kluyveri (strain NBRC 12016).